The chain runs to 490 residues: ATP synthase subunit alpha 1 (490 aa).

Belongs to the ATPase alpha/beta chains family. As to quaternary structure, F-type ATPases have 2 components, CF(1) - the catalytic core - and CF(0) - the membrane proton channel. CF(1) has five subunits: alpha(3), beta(3), gamma(1), delta(1), epsilon(1). CF(0) has three main subunits: a(1), b(2) and c(9-12). The alpha and beta chains form an alternating ring which encloses part of the gamma chain. CF(1) is attached to CF(0) by a central stalk formed by the gamma and epsilon chains, while a peripheral stalk is formed by the delta and b chains.

The protein resides in the cell inner membrane. The enzyme catalyses ATP + H2O + 4 H(+)(in) = ADP + phosphate + 5 H(+)(out). Produces ATP from ADP in the presence of a proton gradient across the membrane. The alpha chain is a regulatory subunit. This chain is ATP synthase subunit alpha 1, found in Legionella pneumophila (strain Paris).